Reading from the N-terminus, the 1779-residue chain is 6-methylsalicylic acid synthase (1779 aa).

A compositionally biased stretch (polar residues) spans 1-11 (MSASRSSTKFS). The tract at residues 1–40 (MSASRSSTKFSTPAEGSDNGKEFTTPATSTEGHEVPDRPG) is disordered. A compositionally biased stretch (basic and acidic residues) spans 31–40 (EGHEVPDRPG). The Ketosynthase family 3 (KS3) domain maps to 43 to 472 (LADVAIIGMA…GTVSHAVLEA (430 aa)). Active-site for beta-ketoacyl synthase activity residues include cysteine 215, histidine 350, and histidine 392. The interval 586–883 (WIFSGHGAQW…TPTMVRRQPA (298 aa)) is malonyl-CoA:ACP transacylase (MAT) domain. Catalysis depends on serine 672, which acts as the For acyl/malonyl transferase activity. The interval 942–1218 (THDPAANNLL…SFAGLEGESF (277 aa)) is product template (PT) domain. Positions 948-1064 (NNLLGKRIAL…AAVGAANVVP (117 aa)) are N-terminal hotdog fold. One can recognise a PKS/mFAS DH domain in the interval 948–1219 (NNLLGKRIAL…FAGLEGESFS (272 aa)). Histidine 980 serves as the catalytic Proton acceptor; for dehydratase activity. Residues 1079 to 1219 (PQKLADSFSI…FAGLEGESFS (141 aa)) form a C-terminal hotdog fold region. Aspartate 1138 (proton donor; for dehydratase activity) is an active-site residue. Positions 1703–1777 (QHLRDVINGC…HLVKHFTKEL (75 aa)) constitute a Carrier domain. Serine 1737 carries the O-(pantetheine 4'-phosphoryl)serine modification.

It carries out the reaction 3 malonyl-CoA + acetyl-CoA + NADPH + 3 H(+) = 6-methylsalicylate + 3 CO2 + NADP(+) + 4 CoA + H2O. It participates in secondary metabolite biosynthesis; terpenoid biosynthesis. Its function is as follows. Non-reducing polyketide synthase; part of the gene cluster that mediates the biosynthesis of yanuthone D, a fungal isoprenoid epoxycyclohexenone that acts as an antibiotic against fungi and bacteria. The first step of the pathway is the synthesis of 6-methylsalicylic acid (6-MSA) by the polyketide synthase yanA. 6-MSA is then converted to m-cresol by the decarboxylase yanB. The cytochrome P450 monooxygenase yanC then catalyzes the oxidation of m-cresol to toluquinol. Epoxidation of toluquinol is then performed by the short chain dehydrogenase yanD, with the help of yanE, and a further prenylation by yanG leads to 7-deacetoxyyanuthone A. The next step is the hydroxylation of C-22 of 7-deacetoxyyanuthone A by the cytochrome P450 monooxygenase yanH to yield 22-deacetylyanuthone A. O-Mevalon transferase yanI then attaches mevalon to the hydroxyl group of 22-deacetylyanuthone A to produce yanuthone E. Finally, the FAD-dependent monooxygenase yanF oxidizes the hydroxyl group at C15 of yanuthone E to form yanuthone D. Furthermore, several branching points in the pathway lead to the production of yanuthones F and G from 7-deacetoxyyanuthone A; yanuthones H and I from 22-deacetylyanuthone A; and yanuthone J from yanuthone E. The chain is 6-methylsalicylic acid synthase from Aspergillus niger (strain ATCC 1015 / CBS 113.46 / FGSC A1144 / LSHB Ac4 / NCTC 3858a / NRRL 328 / USDA 3528.7).